A 1715-amino-acid polypeptide reads, in one-letter code: Ubiquitin carboxyl-terminal hydrolase 32 (1715 aa).

2 EF-hand domains span residues 161–196 (IPKNALAGLFNAFDENRDGHIDFKELCCGVSAACRG) and 197–232 (PGVERTRFCFKIFDVDRDGVLSHDETLQMINVLLLV). 9 residues coordinate Ca(2+): Asp174, Asn176, Asp178, His180, Glu185, Asp210, Asp212, Asp214, and Glu221. The region spanning 314–492 (QCKHMENDIV…DNLPLPRQVI (179 aa)) is the DUSP domain. The tract at residues 393-429 (QHDSYSLGSGTGSASGSGSASSGISAGRHCGPVRPGP) is disordered. A compositionally biased stretch (low complexity) spans 408–419 (GSGSASSGISAG). The 999-residue stretch at 677 to 1675 (TGLHNLGNTC…AAYLLFYERK (999 aa)) folds into the USP domain. Cys686 (nucleophile) is an active-site residue. Composition is skewed to polar residues over residues 1103–1126 (TESNTSSMSYTNHSGENSMESSLT) and 1150–1164 (YRTSPNDSSGLSTGH). 2 disordered regions span residues 1103-1213 (TESN…PHKA) and 1536-1569 (DEIDAPSKEVKEELPNQTGSTKATASPPPTGNIL). The span at 1171–1180 (DVDEQAEEGN) shows a compositional bias: acidic residues. Over residues 1188–1209 (DQITTSQPETSSGVYSRRSSQP) the composition is skewed to polar residues. Over residues 1540–1549 (APSKEVKEEL) the composition is skewed to basic and acidic residues. A compositionally biased stretch (polar residues) spans 1550–1559 (PNQTGSTKAT). The active-site Proton acceptor is the His1633.

This sequence belongs to the peptidase C19 family. USP20/USP33 subfamily.

The catalysed reaction is Thiol-dependent hydrolysis of ester, thioester, amide, peptide and isopeptide bonds formed by the C-terminal Gly of ubiquitin (a 76-residue protein attached to proteins as an intracellular targeting signal).. Deubiquitinating enzyme that acts as an inhibitor of mitophagy probably by counteracting the action of park. Possibly functions by hydrolyzing ubiquitin attached by park on target proteins, thereby reducing park's ability to drive mitophagy. In Drosophila melanogaster (Fruit fly), this protein is Ubiquitin carboxyl-terminal hydrolase 32.